The chain runs to 188 residues: CMT1A duplicated region transcript 15 protein (188 aa).

As to expression, expressed in fetal heart, kidney, liver, lung and spleen.

This chain is CMT1A duplicated region transcript 15 protein (CDRT15), found in Homo sapiens (Human).